We begin with the raw amino-acid sequence, 360 residues long: MTPPPPKRQKRDEYRKATAEAASQPGPSDVAEIKLPKKKYYRQRAHANPFSDHHLNYPLSPAHMDWSSHYPAFVDPDPSHTNLAGARKLLKDVEVVDIGCGFGGLLIGLAPLLPESLIVGMEIRVSVLEYVTTRIQALRAQQLKLRAATAAATAASETPSQQQAQIDGKQANANAAADAASPVLSTDTEHTPTTLVPGSYENISAIRSNTMKFFPNFFARHQLSKIFICFPDPHFKARKHKARIISETLNAEYAYALRPGGLLYTITDVEEYHHWILRHFGVESGAEEESEEKSTSANANANANAGVRELFERVSEEELEKDECVRVMKEATEEGKKVARNKGNKYVAVFRRKTDPEWPA.

The interval 1-32 is disordered; that stretch reads MTPPPPKRQKRDEYRKATAEAASQPGPSDVAE. Residues glycine 99 and 122 to 123 contribute to the S-adenosyl-L-methionine site; that span reads EI. Residues 177-196 form a disordered region; that stretch reads ADAASPVLSTDTEHTPTTLV. Polar residues predominate over residues 183–196; sequence VLSTDTEHTPTTLV. S-adenosyl-L-methionine is bound by residues 209–210 and cysteine 229; that span reads NT. Aspartate 232 is an active-site residue. 332–334 serves as a coordination point for S-adenosyl-L-methionine; it reads TEE.

It belongs to the class I-like SAM-binding methyltransferase superfamily. TrmB family. In terms of assembly, forms a complex with trm82.

It localises to the nucleus. The catalysed reaction is guanosine(46) in tRNA + S-adenosyl-L-methionine = N(7)-methylguanosine(46) in tRNA + S-adenosyl-L-homocysteine. The protein operates within tRNA modification; N(7)-methylguanine-tRNA biosynthesis. Catalyzes the formation of N(7)-methylguanine at position 46 (m7G46) in tRNA. This chain is tRNA (guanine-N(7)-)-methyltransferase (trm8), found in Neosartorya fischeri (strain ATCC 1020 / DSM 3700 / CBS 544.65 / FGSC A1164 / JCM 1740 / NRRL 181 / WB 181) (Aspergillus fischerianus).